Consider the following 51-residue polypeptide: Sec-independent protein translocase protein TatA (51 aa).

The chain crosses the membrane as a helical span at residues 1–21; it reads MGMSFSHLLIILLIIFVLFGA.

The protein belongs to the TatA/E family. As to quaternary structure, the Tat system comprises two distinct complexes: a TatABC complex, containing multiple copies of TatA, TatB and TatC subunits, and a separate TatA complex, containing only TatA subunits. Substrates initially bind to the TatABC complex, which probably triggers association of the separate TatA complex to form the active translocon.

Its subcellular location is the cell inner membrane. In terms of biological role, part of the twin-arginine translocation (Tat) system that transports large folded proteins containing a characteristic twin-arginine motif in their signal peptide across membranes. TatA could form the protein-conducting channel of the Tat system. In Rickettsia bellii (strain RML369-C), this protein is Sec-independent protein translocase protein TatA.